A 71-amino-acid chain; its full sequence is Translation initiation factor IF-1 (71 aa).

Positions 1-71 constitute an S1-like domain; that stretch reads MSKDDLIQFT…LTKGRVIHRH (71 aa).

Belongs to the IF-1 family. As to quaternary structure, component of the 30S ribosomal translation pre-initiation complex which assembles on the 30S ribosome in the order IF-2 and IF-3, IF-1 and N-formylmethionyl-tRNA(fMet); mRNA recruitment can occur at any time during PIC assembly.

Its subcellular location is the cytoplasm. One of the essential components for the initiation of protein synthesis. Stabilizes the binding of IF-2 and IF-3 on the 30S subunit to which N-formylmethionyl-tRNA(fMet) subsequently binds. Helps modulate mRNA selection, yielding the 30S pre-initiation complex (PIC). Upon addition of the 50S ribosomal subunit IF-1, IF-2 and IF-3 are released leaving the mature 70S translation initiation complex. The polypeptide is Translation initiation factor IF-1 (Rickettsia felis (strain ATCC VR-1525 / URRWXCal2) (Rickettsia azadi)).